The following is a 333-amino-acid chain: Heat shock transcription factor, X-linked member 3 (333 aa).

A disordered region spans residues 1–66; that stretch reads MASQNTEQEY…QDNSPPEDRN (66 aa). A compositionally biased stretch (low complexity) spans 29–39; the sequence is GSSPDPNPDSS. The segment covering 49-60 has biased composition (polar residues); sequence AMSQDPGSQDNS. The DNA-binding element occupies 79–182; it reads FRLSFPRKLW…PRLLENIQRK (104 aa). The segment at 227–275 is disordered; that stretch reads QGAPSVQGPSGTQSFRRSGMWSKKSATRHPLGNGPPQEPNGPSWEGTSG. The span at 228-242 shows a compositional bias: polar residues; the sequence is GAPSVQGPSGTQSFR.

The protein belongs to the HSF family.

The protein localises to the nucleus. This Homo sapiens (Human) protein is Heat shock transcription factor, X-linked member 3.